Here is a 201-residue protein sequence, read N- to C-terminus: Putative 3-methyladenine DNA glycosylase (201 aa).

The protein belongs to the DNA glycosylase MPG family.

The sequence is that of Putative 3-methyladenine DNA glycosylase from Clostridium novyi (strain NT).